The sequence spans 1335 residues: Aldehyde oxidase 3 (1335 aa).

The 2Fe-2S ferredoxin-type domain occupies 8–95; it reads DELIFFVNGK…GAAVTTVEGI (88 aa). [2Fe-2S] cluster contacts are provided by C47, C52, C55, and C77. A Mo-molybdopterin-binding site is contributed by Q116. 4 residues coordinate [2Fe-2S] cluster: C117, C120, C152, and C154. In terms of domain architecture, FAD-binding PCMH-type spans 236-421; the sequence is FRGERTTWIA…ISVFVPRSSK (186 aa). Position 264–271 (264–271) interacts with FAD; sequence LVIGNTYL. S320 is modified (phosphoserine). Positions 354, 358, 367, and 411 each coordinate FAD. Mo-molybdopterin contacts are provided by A802, L1043, and Q1199. Residue E1266 is the Proton acceptor; for azaheterocycle hydroxylase activity of the active site.

The protein belongs to the xanthine dehydrogenase family. As to quaternary structure, homodimer. [2Fe-2S] cluster serves as cofactor. FAD is required as a cofactor. It depends on Mo-molybdopterin as a cofactor. In terms of tissue distribution, highly expressed in liver (at protein level). In liver, the expression is greater in males than females.

The protein localises to the cytoplasm. It carries out the reaction an aldehyde + O2 + H2O = a carboxylate + H2O2 + H(+). Inhibited by potassium cyanide, menadione, benzamidine, raloxifene and norharmane. Functionally, oxidase with broad substrate specificity, oxidizing aromatic azaheterocycles, such as N1-methylnicotinamide and phthalazine, as well as aldehydes, such as benzaldehyde, retinal and pyridoxal. Plays a key role in the metabolism of xenobiotics and drugs containing aromatic azaheterocyclic substituents. Is probably involved in the regulation of reactive oxygen species homeostasis. May be a prominent source of superoxide generation via the one-electron reduction of molecular oxygen. May also catalyze nitric oxide (NO) production via the reduction of nitrite to NO with NADH or aldehyde as electron donor. This chain is Aldehyde oxidase 3 (Aox3), found in Mus musculus (Mouse).